The primary structure comprises 447 residues: Argininosuccinate synthase (447 aa).

Residues 20 to 28 (AFSGGLDTS) and A46 each bind ATP. Y102 is a binding site for L-citrulline. Positions 132 and 134 each coordinate ATP. L-aspartate contacts are provided by T134, N138, and D139. L-citrulline is bound at residue N138. D139 lines the ATP pocket. L-citrulline contacts are provided by R142 and S195. An ATP-binding site is contributed by D197. Residues T204, E206, and E283 each coordinate L-citrulline.

Belongs to the argininosuccinate synthase family. Type 2 subfamily. As to quaternary structure, homotetramer.

The protein localises to the cytoplasm. It carries out the reaction L-citrulline + L-aspartate + ATP = 2-(N(omega)-L-arginino)succinate + AMP + diphosphate + H(+). It functions in the pathway amino-acid biosynthesis; L-arginine biosynthesis; L-arginine from L-ornithine and carbamoyl phosphate: step 2/3. This chain is Argininosuccinate synthase, found in Neisseria gonorrhoeae (strain ATCC 700825 / FA 1090).